The primary structure comprises 204 residues: Large ribosomal subunit protein uL4 (204 aa).

The tract at residues 47–69 is disordered; it reads KAQKNRAAVSGGGKKPWRQKGTG.

Belongs to the universal ribosomal protein uL4 family. As to quaternary structure, part of the 50S ribosomal subunit.

Functionally, one of the primary rRNA binding proteins, this protein initially binds near the 5'-end of the 23S rRNA. It is important during the early stages of 50S assembly. It makes multiple contacts with different domains of the 23S rRNA in the assembled 50S subunit and ribosome. In terms of biological role, forms part of the polypeptide exit tunnel. This is Large ribosomal subunit protein uL4 from Teredinibacter turnerae (strain ATCC 39867 / T7901).